The following is a 317-amino-acid chain: Universal stress protein MT2052 (317 aa).

ATP contacts are provided by residues glycine 13, 128-134 (GYRGQGA), 142-143 (SV), glycine 175, aspartate 208, 277-283 (GSHGRGG), and 291-293 (SVS).

Belongs to the universal stress protein A family.

This is Universal stress protein MT2052 from Mycobacterium tuberculosis (strain CDC 1551 / Oshkosh).